Here is a 218-residue protein sequence, read N- to C-terminus: Large ribosomal subunit protein uL3c (218 aa).

A disordered region spans residues 127-161 (GFSRGPMTHGSKNHREPGSTGAGTTPGRIYPGKRM).

The protein belongs to the universal ribosomal protein uL3 family. As to quaternary structure, part of the 50S ribosomal subunit.

The protein resides in the plastid. It localises to the organellar chromatophore. Its function is as follows. One of the primary rRNA binding proteins, it binds directly near the 3'-end of the 23S rRNA, where it nucleates assembly of the 50S subunit. The polypeptide is Large ribosomal subunit protein uL3c (rpl3) (Paulinella chromatophora).